We begin with the raw amino-acid sequence, 179 residues long: Probable phosphopantothenoylcysteine decarboxylase (179 aa).

Residue Asn-124 coordinates substrate. The Proton donor role is filled by Cys-157.

It belongs to the HFCD (homooligomeric flavin containing Cys decarboxylase) superfamily. It depends on FMN as a cofactor.

It carries out the reaction N-[(R)-4-phosphopantothenoyl]-L-cysteine + H(+) = (R)-4'-phosphopantetheine + CO2. Its pathway is cofactor biosynthesis; coenzyme A biosynthesis; CoA from (R)-pantothenate: step 3/5. Its function is as follows. Catalyzes the decarboxylation of 4'-phosphopantothenoylcysteine to 4'-phosphopantetheine. The sequence is that of Probable phosphopantothenoylcysteine decarboxylase (coaC) from Streptococcus mutans serotype c (strain ATCC 700610 / UA159).